Here is a 546-residue protein sequence, read N- to C-terminus: Chaperonin GroEL (546 aa).

ATP is bound by residues 30–33 (TLGP), Lys-51, 87–91 (DGTTT), Gly-415, and Asp-496. The interval 526–546 (PEDKPAPAMPGGMGGMGGMDF) is disordered. A compositionally biased stretch (gly residues) spans 536–546 (GGMGGMGGMDF).

The protein belongs to the chaperonin (HSP60) family. As to quaternary structure, forms a cylinder of 14 subunits composed of two heptameric rings stacked back-to-back. Interacts with the co-chaperonin GroES.

Its subcellular location is the cytoplasm. The enzyme catalyses ATP + H2O + a folded polypeptide = ADP + phosphate + an unfolded polypeptide.. Together with its co-chaperonin GroES, plays an essential role in assisting protein folding. The GroEL-GroES system forms a nano-cage that allows encapsulation of the non-native substrate proteins and provides a physical environment optimized to promote and accelerate protein folding. The polypeptide is Chaperonin GroEL (Zymomonas mobilis subsp. mobilis (strain ATCC 31821 / ZM4 / CP4)).